Here is a 170-residue protein sequence, read N- to C-terminus: Adenine phosphoribosyltransferase (170 aa).

It belongs to the purine/pyrimidine phosphoribosyltransferase family. As to quaternary structure, homodimer.

Its subcellular location is the cytoplasm. It catalyses the reaction AMP + diphosphate = 5-phospho-alpha-D-ribose 1-diphosphate + adenine. It participates in purine metabolism; AMP biosynthesis via salvage pathway; AMP from adenine: step 1/1. In terms of biological role, catalyzes a salvage reaction resulting in the formation of AMP, that is energically less costly than de novo synthesis. This chain is Adenine phosphoribosyltransferase, found in Nitrosopumilus maritimus (strain SCM1).